The chain runs to 984 residues: MGPAIHNQLYECGLKTTSQDGFLMDNYETQLFQSLNRFINFINNANQSASNKEQNTKFCKSSSNFLRLKLLTVLRQWCDSSRSNCTLEVRDVLTQWWVTLLNFLNSDTSLQIDTALELSLSIELTSVCLECLSKIMTILIILPFHSSRDMEIYSHHLLLTIHCITNKLILISKNSKKLKRTNSDDKCSINDKKLQYLNKYSSLLRAFIGKLNAYAFFYLPEDFHFDTILLLTVSPQISSSIQTSLFSWKKRQYKFTDDQGQMIRTEAFENKDTKFFKIIVSYIKNDFVLMSFYWHYWYIILQFMKFSDSDVGIKKSTLSCIPGSEILLTHVTTRFLNSDLNKFTRIIKQTPNPRIANENVTESHPNFKSLNSSNALITSERINDYVFSNFKTIKLWECLRSLSGCILKENHPEYLENMLSLHESLLIDYVSTISAYDYIAANVIYNKVLQFIIFQFESLPSLKFIQWRSWYNGLLSMLRTKNVNCQTVSLLCLFNIWKHVTIEDRDEIVKVLLSDFWESLIFENEFPLIRILFMKVLVFKIIPSVQNSSSLRFLPHDRIKQLYEELLVNKEELFEMQKHDSNDIVAHRKNALVFNGNSRLMMIPKKPNTEDHLVYKINHDKNLTTERFPSVSSVANTRPNVILKNGKYAYDILDEMTSKAAFLLAEKKTRLNPKKNHKIMDGYEGGQENEDNDEDSEDSGSHKNKRKEGNSSLSATLNTWLSKFSSTSEDSQKKKEQANELGNDFEYDEDVADFAEILPKQSSSNIEKIFKHGNNSGSMVSYNSSIKLNRRENILIGPPELRFSNEIKEHNSIATIFKLVFIQTNRRVVEKIDLANMKWGTIHGGSKYMKPLPVPKDLVASVAKNESETRNLATLCGNGLDFEIPVPDFNIFGKCMEDEQDVAKIGNQNVEDLKVTGGREVTIWKQIQDMKLRTRIQKICVLIETFNATVREYFEFSNRLEHDGIFIDFEVRKPSSNNSINIKV.

The disordered stretch occupies residues 675-712 (KNHKIMDGYEGGQENEDNDEDSEDSGSHKNKRKEGNSS). The span at 687 to 698 (QENEDNDEDSED) shows a compositional bias: acidic residues.

This sequence belongs to the UPF0592 family.

This chain is UPF0592 protein YDL073W, found in Saccharomyces cerevisiae (strain ATCC 204508 / S288c) (Baker's yeast).